Consider the following 230-residue polypeptide: Flagellar L-ring protein (230 aa).

A signal peptide spans 1 to 15 (MSRPPLLSSACLAAT). C16 carries N-palmitoyl cysteine lipidation. C16 carries the S-diacylglycerol cysteine lipid modification.

This sequence belongs to the FlgH family. The basal body constitutes a major portion of the flagellar organelle and consists of four rings (L,P,S, and M) mounted on a central rod.

It localises to the cell outer membrane. The protein localises to the bacterial flagellum basal body. Its function is as follows. Assembles around the rod to form the L-ring and probably protects the motor/basal body from shearing forces during rotation. This chain is Flagellar L-ring protein, found in Xanthomonas oryzae pv. oryzae (strain MAFF 311018).